Consider the following 946-residue polypeptide: Bifunctional glutamine synthetase adenylyltransferase/adenylyl-removing enzyme (946 aa).

An adenylyl removase region spans residues Met1 to Glu440. Residues Ser449–Glu946 are adenylyl transferase.

The protein belongs to the GlnE family. Mg(2+) serves as cofactor.

The enzyme catalyses [glutamine synthetase]-O(4)-(5'-adenylyl)-L-tyrosine + phosphate = [glutamine synthetase]-L-tyrosine + ADP. It carries out the reaction [glutamine synthetase]-L-tyrosine + ATP = [glutamine synthetase]-O(4)-(5'-adenylyl)-L-tyrosine + diphosphate. Functionally, involved in the regulation of glutamine synthetase GlnA, a key enzyme in the process to assimilate ammonia. When cellular nitrogen levels are high, the C-terminal adenylyl transferase (AT) inactivates GlnA by covalent transfer of an adenylyl group from ATP to specific tyrosine residue of GlnA, thus reducing its activity. Conversely, when nitrogen levels are low, the N-terminal adenylyl removase (AR) activates GlnA by removing the adenylyl group by phosphorolysis, increasing its activity. The regulatory region of GlnE binds the signal transduction protein PII (GlnB) which indicates the nitrogen status of the cell. The sequence is that of Bifunctional glutamine synthetase adenylyltransferase/adenylyl-removing enzyme from Shigella boydii serotype 18 (strain CDC 3083-94 / BS512).